The primary structure comprises 787 residues: Endonuclease MutS2 (787 aa).

ATP is bound at residue 331–338; the sequence is GPNTGGKT. The Smr domain occupies 711-786; it reads IDVRGKTSDD…EQGVTIVELR (76 aa).

Belongs to the DNA mismatch repair MutS family. MutS2 subfamily. As to quaternary structure, homodimer. Binds to stalled ribosomes, contacting rRNA.

Functionally, endonuclease that is involved in the suppression of homologous recombination and thus may have a key role in the control of bacterial genetic diversity. Acts as a ribosome collision sensor, splitting the ribosome into its 2 subunits. Detects stalled/collided 70S ribosomes which it binds and splits by an ATP-hydrolysis driven conformational change. Acts upstream of the ribosome quality control system (RQC), a ribosome-associated complex that mediates the extraction of incompletely synthesized nascent chains from stalled ribosomes and their subsequent degradation. Probably generates substrates for RQC. The protein is Endonuclease MutS2 of Caldicellulosiruptor saccharolyticus (strain ATCC 43494 / DSM 8903 / Tp8T 6331).